Consider the following 345-residue polypeptide: CCAAT/enhancer-binding protein beta (345 aa).

Residues 1–24 (MQRLVAWDPACLPLPPPPPAFKSM) form a required for Lys-174 sumoylation region. R3 is subject to Asymmetric dimethylarginine; by CARM1. The required for MYC transcriptional repression stretch occupies residues 24–135 (MEVANFYYEA…YGGKNCKKPA (112 aa)). K43 bears the N6-acetyllysine; alternate mark. K43 bears the N6-methylated lysine; alternate mark. Disordered regions lie at residues 46-67 (PAAP…GSIG) and 79-116 (LEPL…QHHD). A compositionally biased stretch (pro residues) spans 47–59 (AAPPAARPGPRPP). A compositionally biased stretch (low complexity) spans 84–100 (APQAPAPATATDTFEAA). The short motif at 116–124 (DFLSDLFSD) is the 9aaTAD element. N6-acetyllysine; by KAT2A and KAT2B occurs at positions 129 and 132. Position 133 is an N6-acetyllysine; by KAT2A and KAT2B; alternate (K133). K133 is covalently cross-linked (Glycyl lysine isopeptide (Lys-Gly) (interchain with G-Cter in SUMO2); alternate). The interval 157-178 (FAPLHPPPPPPPPPAELKAEPG) is disordered. Over residues 160–171 (LHPPPPPPPPPA) the composition is skewed to pro residues. K174 participates in a covalent cross-link: Glycyl lysine isopeptide (Lys-Gly) (interchain with G-Cter in SUMO2); alternate. Residue K174 forms a Glycyl lysine isopeptide (Lys-Gly) (interchain with G-Cter in SUMO); alternate linkage. Glycyl lysine isopeptide (Lys-Gly) (interchain with G-Cter in SUMO2) cross-links involve residues K185 and K187. A compositionally biased stretch (low complexity) spans 218–232 (SGSSGSLSTSSSSSP). Positions 218–271 (SGSSGSLSTSSSSSPPGTPSPADAKAPPTACYAGAAPAPSQVKSKAKKTVDKHS) are disordered. Residue T226 is modified to Phosphothreonine; by GSK3-beta. 2 O-linked (GlcNAc) serine glycosylation sites follow: S227 and S228. The residue at position 231 (S231) is a Phosphoserine; by GSK3-beta. T235 bears the Phosphothreonine; by RPS6KA1, CDK2 and MAPK mark. Residues K260 and K262 each participate in a glycyl lysine isopeptide (Lys-Gly) (interchain with G-Cter in SUMO2) cross-link. Phosphothreonine; by RPS6KA1 and PKC/PRKCA is present on T266. A bZIP domain is found at 271 to 334 (SDEYKIRRER…STLRNLFKQL (64 aa)). The basic motif stretch occupies residues 275–295 (KIRRERNNIAVRKSRDKAKMR). Phosphoserine; by PKC/PRKCA is present on S288. The tract at residues 297-304 (LETQHKVL) is leucine-zipper. At S325 the chain carries Phosphoserine; by CaMK2. A Glycyl lysine isopeptide (Lys-Gly) (interchain with G-Cter in SUMO2) cross-link involves residue K332.

The protein belongs to the bZIP family. C/EBP subfamily. As to quaternary structure, binds DNA as a homodimer and as a heterodimer. Interacts with ATF4. Binds DNA as a heterodimer with ATF4. Interacts with MYB; within the complex, MYB and CEBPB bind to different promoter regions. Can form stable heterodimers with CEBPD. Can form stable heterodimers with CEBPA and CEBPE. Interacts with SIX1. Isoform 2 and isoform 3 also form heterodimers. Interacts with TRIM28 and PTGES2. Interacts with PRDM16. Interacts with CCDC85B. Forms a complex with THOC5. Interacts with ZNF638; this interaction increases transcriptional activation. Interacts with CIDEA and CIDEC; these interactions increase transcriptional activation of a subset of CEBPB downstream target genes. Interacts with DDIT3/CHOP. Interacts with EP300; recruits EP300 to chromatin. Interacts with RORA; the interaction disrupts interaction with EP300. Interacts (not methylated) with MED23, MED26, SMARCA2, SMARCB1 and SMARCC1. Interacts with KAT2A and KAT2B. Interacts with ATF5; EP300 is required for ATF5 and CEBPB interaction and DNA binding. Interacts with NFE2L1; the heterodimer represses expression of DSPP during odontoblast differentiation. In terms of processing, methylated. Methylation at Arg-3 by CARM1 and at Lys-43 by EHMT2 inhibit transactivation activity. Methylation is probably inhibited by phosphorylation at Thr-235. Sumoylated by polymeric chains of SUMO2 or SUMO3. Sumoylation at Lys-174 is required for inhibition of T-cells proliferation. In adipocytes, sumoylation at Lys-174 by PIAS1 leads to ubiquitination and subsequent proteasomal degradation. Desumoylated by SENP2, which abolishes ubiquitination and stabilizes protein levels. Post-translationally, ubiquitinated, leading to proteasomal degradation. In terms of processing, phosphorylated at Thr-235 by MAPK and CDK2, serves to prime phosphorylation at Thr-226 and Ser-231 by GSK3B and acquire DNA-binding as well as transactivation activities, required to induce adipogenesis. MAPK and CDK2 act sequentially to maintain Thr-235 in the primed phosphorylated state during mitotical cloning expansion and thereby progression of terminal differentiation. Phosphorylation at Thr-266 enhances transactivation activity. Phosphorylation at Ser-325 in response to calcium increases transactivation activity. Phosphorylated at Thr-235 by RPS6KA1. O-glycosylated, glycosylation at Ser-227 and Ser-228 prevents phosphorylation on Thr-235, Ser-231 and Thr-226 and DNA binding activity which delays the adipocyte differentiation program. Post-translationally, acetylated. Acetylation at Lys-43 is an important and dynamic regulatory event that contributes to its ability to transactivate target genes, including those associated with adipogenesis and adipocyte function. Deacetylation by HDAC1 represses its transactivation activity. Acetylated by KAT2A and KAT2B within a cluster of lysine residues between amino acids 129-133, this acetylation is strongly induced by glucocorticoid treatment and enhances transactivation activity. In terms of tissue distribution, expressed at low levels in the lung, kidney and spleen.

Its subcellular location is the nucleus. It is found in the cytoplasm. Important transcription factor regulating the expression of genes involved in immune and inflammatory responses. Also plays a significant role in adipogenesis, as well as in the gluconeogenic pathway, liver regeneration, and hematopoiesis. The consensus recognition site is 5'-T[TG]NNGNAA[TG]-3'. Its functional capacity is governed by protein interactions and post-translational protein modifications. During early embryogenesis, plays essential and redundant roles with CEBPA. Has a promitotic effect on many cell types such as hepatocytes and adipocytes but has an antiproliferative effect on T-cells by repressing MYC expression, facilitating differentiation along the T-helper 2 lineage. Binds to regulatory regions of several acute-phase and cytokines genes and plays a role in the regulation of acute-phase reaction and inflammation. Also plays a role in intracellular bacteria killing. During adipogenesis, is rapidly expressed and, after activation by phosphorylation, induces CEBPA and PPARG, which turn on the series of adipocyte genes that give rise to the adipocyte phenotype. The delayed transactivation of the CEBPA and PPARG genes by CEBPB appears necessary to allow mitotic clonal expansion and thereby progression of terminal differentiation. Essential for female reproduction because of a critical role in ovarian follicle development. Restricts osteoclastogenesis: together with NFE2L1; represses expression of DSPP during odontoblast differentiation. Its function is as follows. Essential for gene expression induction in activated macrophages. Plays a major role in immune responses such as CD4(+) T-cell response, granuloma formation and endotoxin shock. Not essential for intracellular bacteria killing. Functionally, acts as a dominant negative through heterodimerization with isoform 2. Promotes osteoblast differentiation and osteoclastogenesis. The protein is CCAAT/enhancer-binding protein beta of Homo sapiens (Human).